Here is a 203-residue protein sequence, read N- to C-terminus: Small ribosomal subunit protein uS3 (203 aa).

One can recognise a KH type-2 domain in the interval 39 to 113; it reads IREIIRRNFL…NHVLNAKNIA (75 aa).

It belongs to the universal ribosomal protein uS3 family. In terms of assembly, part of the 30S ribosomal subunit. Forms a tight complex with proteins S10 and S14.

Binds the lower part of the 30S subunit head. Binds mRNA in the 70S ribosome, positioning it for translation. The polypeptide is Small ribosomal subunit protein uS3 (Carsonella ruddii).